Reading from the N-terminus, the 491-residue chain is Probable glycine dehydrogenase (decarboxylating) subunit 2 (491 aa).

Residue Lys273 is modified to N6-(pyridoxal phosphate)lysine.

It belongs to the GcvP family. C-terminal subunit subfamily. The glycine cleavage system is composed of four proteins: P, T, L and H. In this organism, the P 'protein' is a heterodimer of two subunits. Pyridoxal 5'-phosphate is required as a cofactor.

The catalysed reaction is N(6)-[(R)-lipoyl]-L-lysyl-[glycine-cleavage complex H protein] + glycine + H(+) = N(6)-[(R)-S(8)-aminomethyldihydrolipoyl]-L-lysyl-[glycine-cleavage complex H protein] + CO2. The glycine cleavage system catalyzes the degradation of glycine. The P protein binds the alpha-amino group of glycine through its pyridoxal phosphate cofactor; CO(2) is released and the remaining methylamine moiety is then transferred to the lipoamide cofactor of the H protein. The protein is Probable glycine dehydrogenase (decarboxylating) subunit 2 of Bacillus cereus (strain G9842).